The chain runs to 614 residues: Protein B602L (614 aa).

31 repeat units span residues 161–164 (CAST), 165–168 (NADT), 169–172 (SAST), 173–176 (NADT), 177–180 (SAST), 181–184 (NASI), 185–188 (NADT), 189–192 (NVDT), 193–196 (CAST), 197–200 (NAST), 201–204 (NVDT), 205–208 (NASI), 209–212 (NAST), 213–216 (NAST), 217–220 (NVDT), 221–224 (NAST), 225–228 (NASI), 229–232 (NADT), 233–236 (NVDT), 237–240 (CAST), 241–244 (NAST), 245–248 (NVDT), 249–252 (NASI), 253–256 (NAST), 257–260 (NAST), 261–264 (NVDT), 265–268 (NADI), 269–272 (NANT), 273–276 (NADI), 277–280 (NANI), and 281–284 (NANT). The interval 161–284 (CASTNADTSA…DINANINANT (124 aa)) is 28 X 4 AA tandem repeats of [CNS]-[AV]-[DNS]-[IT].

The protein belongs to the asfivirus B602L family.

Its subcellular location is the host cytoplasm. Plays an essential role in the assembly of the icosahedral capsid of the virus. Allows the assembly of 3 molecules of hexon protein p72 and formation of a thermostable trimer. The sequence is that of Protein B602L from African swine fever virus (isolate Tick/Malawi/Lil 20-1/1983) (ASFV).